Consider the following 436-residue polypeptide: Trigger factor (436 aa).

2 disordered regions span residues 1-26 and 81-100; these read MQVS…RVEN and QESL…TGEG. The PPIase FKBP-type domain maps to 161–246; the sequence is EDRVVIDFHG…VKRVEEPQLP (86 aa).

This sequence belongs to the FKBP-type PPIase family. Tig subfamily.

The protein resides in the cytoplasm. It catalyses the reaction [protein]-peptidylproline (omega=180) = [protein]-peptidylproline (omega=0). In terms of biological role, involved in protein export. Acts as a chaperone by maintaining the newly synthesized protein in an open conformation. Functions as a peptidyl-prolyl cis-trans isomerase. The protein is Trigger factor of Halorhodospira halophila (strain DSM 244 / SL1) (Ectothiorhodospira halophila (strain DSM 244 / SL1)).